A 451-amino-acid chain; its full sequence is Tubulin alpha-1B chain (451 aa).

Positions 1-4 (MREC) match the MREC motif motif. 4 residues coordinate GTP: glycine 10, glutamine 11, alanine 12, and glutamine 15. An N6,N6,N6-trimethyllysine; alternate modification is found at lysine 40. Lysine 40 carries the N6-acetyllysine; alternate modification. Serine 48 carries the post-translational modification Phosphoserine. GTP-binding residues include glutamate 71, alanine 99, serine 140, glycine 143, glycine 144, threonine 145, glycine 146, threonine 179, glutamate 183, asparagine 206, tyrosine 224, and asparagine 228. Glutamate 71 contributes to the Mg(2+) binding site. Residue serine 232 is modified to Phosphoserine. Position 252 (leucine 252) interacts with GTP. Residue glutamate 254 is part of the active site. The residue at position 282 (tyrosine 282) is a 3'-nitrotyrosine. Lysine 326 is covalently cross-linked (Glycyl lysine isopeptide (Lys-Gly) (interchain with G-Cter in ubiquitin)). An Omega-N-methylarginine modification is found at arginine 339. A Glycyl lysine isopeptide (Lys-Gly) (interchain with G-Cter in ubiquitin) cross-link involves residue lysine 370. Residue serine 439 is modified to Phosphoserine. 2 positions are modified to 5-glutamyl polyglutamate: glutamate 443 and glutamate 445. Tyrosine 451 is modified (3'-nitrotyrosine).

Belongs to the tubulin family. Heterodimer of alpha- and beta-tubulin. A typical microtubule is a hollow water-filled tube with an outer diameter of 25 nm and an inner diameter of 15 nM. Alpha-beta heterodimers associate head-to-tail to form protofilaments running lengthwise along the microtubule wall with the beta-tubulin subunit facing the microtubule plus end conferring a structural polarity. Microtubules usually have 13 protofilaments but different protofilament numbers can be found in some organisms and specialized cells. Interacts with gamma-tubulin; the interaction allows microtubules to nucleate from the gamma-tubulin ring complex (gTuRC). Nascent microtubule interacts (via alpha-tubulin MREC motif) with TTC5/STRAP; this interaction may result in tubulin mRNA-targeted degradation. Component of sperm flagellar doublet microtubules. The cofactor is Mg(2+). Post-translationally, some glutamate residues at the C-terminus are polyglycylated, resulting in polyglycine chains on the gamma-carboxyl group. Glycylation is mainly limited to tubulin incorporated into axonemes (cilia and flagella) whereas glutamylation is prevalent in neuronal cells, centrioles, axonemes, and the mitotic spindle. Both modifications can coexist on the same protein on adjacent residues, and lowering polyglycylation levels increases polyglutamylation, and reciprocally. Cilia and flagella glycylation is required for their stability and maintenance. Flagella glycylation controls sperm motility. Some glutamate residues at the C-terminus are polyglutamylated, resulting in polyglutamate chains on the gamma-carboxyl group. Polyglutamylation plays a key role in microtubule severing by spastin (SPAST). SPAST preferentially recognizes and acts on microtubules decorated with short polyglutamate tails: severing activity by SPAST increases as the number of glutamates per tubulin rises from one to eight, but decreases beyond this glutamylation threshold. Glutamylation is also involved in cilia motility. In terms of processing, acetylation of alpha chains at Lys-40 is located inside the microtubule lumen. This modification has been correlated with increased microtubule stability, intracellular transport and ciliary assembly. Post-translationally, methylation of alpha chains at Lys-40 is found in mitotic microtubules and is required for normal mitosis and cytokinesis contributing to genomic stability. Nitration of Tyr-451 is irreversible and interferes with normal dynein intracellular distribution. In terms of processing, undergoes a tyrosination/detyrosination cycle, the cyclic removal and re-addition of a C-terminal tyrosine residue by the enzymes tubulin tyrosine carboxypeptidase (MATCAP1, VASH1 or VASH2) and tubulin tyrosine ligase (TTL), respectively. Post-translationally, tyrosination promotes microtubule interaction with CAP-Gly domain-containing proteins such as CLIP1, CLIP2 and DCTN1. Tyrosination regulates the initiation of dynein-dynactin motility via interaction with DCTN1, which brings the dynein-dynactin complex into contact with microtubules. In neurons, tyrosinated tubulins mediate the initiation of retrograde vesicle transport. Detyrosination is involved in metaphase plate congression by guiding chromosomes during mitosis: detyrosination promotes interaction with CENPE, promoting pole-proximal transport of chromosomes toward the equator. Detyrosination increases microtubules-dependent mechanotransduction in dystrophic cardiac and skeletal muscle. In cardiomyocytes, detyrosinated microtubules are required to resist to contractile compression during contraction: detyrosination promotes association with desmin (DES) at force-generating sarcomeres, leading to buckled microtubules and mechanical resistance to contraction.

It localises to the cytoplasm. It is found in the cytoskeleton. It catalyses the reaction GTP + H2O = GDP + phosphate + H(+). Its function is as follows. Tubulin is the major constituent of microtubules, protein filaments consisting of alpha- and beta-tubulin heterodimers. Microtubules grow by the addition of GTP-tubulin dimers to the microtubule end, where a stabilizing cap forms. Below the cap, tubulin dimers are in GDP-bound state, owing to GTPase activity of alpha-tubulin. This chain is Tubulin alpha-1B chain (TUBA1B), found in Pan troglodytes (Chimpanzee).